The following is a 319-amino-acid chain: Cytochrome f (319 aa).

Positions 1-35 are cleaved as a signal peptide; that stretch reads MQKKDVCEYITKWVSVTISTLVTIGVLVFPLSSEA. Heme is bound by residues Tyr36, Cys56, Cys59, and His60. The chain crosses the membrane as a helical span at residues 285–305; the sequence is IQGLLVFFASVVLAQIFLVLK.

The protein belongs to the cytochrome f family. The 4 large subunits of the cytochrome b6-f complex are cytochrome b6, subunit IV (17 kDa polypeptide, petD), cytochrome f and the Rieske protein, while the 4 small subunits are PetG, PetL, PetM and PetN. The complex functions as a dimer. Heme is required as a cofactor.

It localises to the plastid. The protein resides in the chloroplast thylakoid membrane. Functionally, component of the cytochrome b6-f complex, which mediates electron transfer between photosystem II (PSII) and photosystem I (PSI), cyclic electron flow around PSI, and state transitions. This Zygnema circumcarinatum (Green alga) protein is Cytochrome f.